We begin with the raw amino-acid sequence, 140 residues long: Lysozyme E (140 aa).

The N-terminal stretch at 1-18 (MKAFIVLVALAMAAPALG) is a signal peptide. Residues 19-140 (RTLDRCSLAR…GWLPSIDGCF (122 aa)) enclose the C-type lysozyme domain. 4 disulfide bridges follow: C24/C139, C45/C129, C80/C96, and C92/C110. Residues E50 and D68 contribute to the active site.

The protein belongs to the glycosyl hydrolase 22 family. In terms of tissue distribution, found in the midgut.

It catalyses the reaction Hydrolysis of (1-&gt;4)-beta-linkages between N-acetylmuramic acid and N-acetyl-D-glucosamine residues in a peptidoglycan and between N-acetyl-D-glucosamine residues in chitodextrins.. Its function is as follows. Unlikely to play an active role in the humoral immune defense. May have a function in the digestion of bacteria in the food. The chain is Lysozyme E (LysE) from Drosophila melanogaster (Fruit fly).